The primary structure comprises 1111 residues: Lysylphosphatidylglycerol biosynthesis bifunctional protein LysX (1111 aa).

The interval 1–612 (MTLTSPPRTR…VLHHDGTAPD (612 aa)) is phosphatidylglycerol lysyltransferase. 7 helical membrane passes run 18 to 38 (VPAAAGWTVGVIATLSLIASV), 60 to 80 (FPDTSFAWAFVLALLAGALAA), 84 to 104 (IAWWILLLYMVAAVGWNVADL), 118 to 138 (VIGLAFHLAAVAFLLLARPLF), 152 to 172 (GVLAAGMAVGVLVGWGLLELF), 209 to 229 (VNALLGLFGALALMAAAIVLF), and 308 to 328 (AWLALCGTYGWAPGVMGASVG). The segment at 613 to 1111 (MSGLRTDTAD…TLPFPLARPR (499 aa)) is lysine--tRNA ligase. Residues 674-747 (VAGRVLRIRD…GTRSLLVRHW (74 aa)) constitute a DNA-binding region (OB). 2 residues coordinate Mg(2+): Asp1023 and Glu1030.

It in the N-terminal section; belongs to the LPG synthetase family. This sequence in the C-terminal section; belongs to the class-II aminoacyl-tRNA synthetase family. Requires Mg(2+) as cofactor.

The protein resides in the cell membrane. The catalysed reaction is tRNA(Lys) + L-lysine + ATP = L-lysyl-tRNA(Lys) + AMP + diphosphate. The enzyme catalyses L-lysyl-tRNA(Lys) + a 1,2-diacyl-sn-glycero-3-phospho-(1'-sn-glycerol) = a 1,2-diacyl-sn-glycero-3-phospho-1'-(3'-O-L-lysyl)-sn-glycerol + tRNA(Lys). In terms of biological role, catalyzes the production of L-lysyl-tRNA(Lys)transfer and the transfer of a lysyl group from L-lysyl-tRNA(Lys) to membrane-bound phosphatidylglycerol (PG), which produces lysylphosphatidylglycerol (LPG), one of the components of the bacterial membrane with a positive net charge. LPG synthesis contributes to the resistance to cationic antimicrobial peptides (CAMPs) and likely protects M.tuberculosis against the CAMPs produced by competiting microorganisms (bacteriocins). In fact, the modification of anionic phosphatidylglycerol with positively charged L-lysine results in repulsion of the peptides. The protein is Lysylphosphatidylglycerol biosynthesis bifunctional protein LysX (lysX) of Mycobacterium sp. (strain JLS).